The sequence spans 1616 residues: MEGAEPRARPERLAEAETRAADGGRLVEVQLSGGAPWGFTLKGGREHGEPLVITKIEEGSKAAAVDKLLAGDEIVGINDIGLSGFRQEAICLVKGSHKTLKLVVKRRSELGWRPHSWHATKFSDSHPELAASPFTSTSGCPSWSGRHHASSSSHDLSSSWEQTNLQRTLDHFSSLGSVDSLDHPSSRLSVAKSNSSIDHLGSHSKRDSAYGSFSTSSSTPDHTLSKADTSSAENILYTVGLWEAPRQGGRQAQAAGDPQGSEEKLSCFPPRVPGDSGKGPRPEYNAEPKLAAPGRSNFGPVWYVPDKKKAPSSPPPPPPPLRSDSFAATKSHEKAQGPVFSEAAAAQHFTALAQAQPRGDRRPELTDRPWRSAHPGSLGKGSGGPGCPQEAHADGSWPPSKDGASSRLQASLSSSDVRFPQSPHSGRHPPLYSDHSPLCADSLGQEPGAASFQNDSPPQVRGLSSCDQKLGSGWQGPRPCVQGDLQAAQLWAGCWPSDTALGALESLPPPTVGQSPRHHLPQPEGPPDARETGRCYPLDKGAEGCSAGAQEPPRASRAEKASQRLAASITWADGESSRICPQETPLLHSLTQEGKRRPESSPEDSATRPPPFDAHVGKPTRRSDRFATTLRNEIQMHRAKLQKSRSTVALTAAGEAEDGTGRWRAGLGGGTQEGPLAGTYKDHLKEAQARVLRATSFKRRDLDPNPGDLYPESLEHRMGDPDTVPHFWEAGLAQPPSSTSGGPHPPRIGGRRRFTAEQKLKSYSEPEKMNEVGLTRGYSPHQHPRTSEDTVGTFADRWKFFEETSKPVPQRPAQKQALHGIPRDKPERPRTAGRTCEGTEPWSRTTSLGDSLNAHSAAEKAGTSDLPRRLGTFAEYQASWKEQRKPLEARSSGRCHSADDILDVSLDPQERPQHVHGRSRSSPSTDHYKQEASVELRRQAGDPGEPREELPSAVRAEEGQSTPRQADAQCREGSPGSQQHPPSQKAPNPPTFSELSHCRGAPELPREGRGRAGTLPRDYRYSEESTPADLGPRAQSPGSPLHARGQDSWPVSSALLSKRPAPQRPPPPKREPRRYRATDGAPADAPVGVLGRPFPTPSPASLDVYVARLSLSHSPSVFSSAQPQDTPKATVCERGSQHVSGDASRPLPEALLPPKQQHLRLQTATMETSRSPSPQFAPQKLTDKPPLLIQDEDSTRIERVMDNNTTVKMVPIKIVHSESQPEKESRQSLACPAEPPALPHGLEKDQIKTLSTSEQFYSRFCLYTRQGAEPEAPHRAQPAEPQPLGTQVPPEKDRCTSPPGLSYMKAKEKTVEDLKSEELAREIVGKDKSLADILDPSVKIKTTMDLMEGIFPKDEHLLEEAQQRRKLLPKIPSPRSTEERKEEPSVPAAVSLATNSTYYSTSAPKAELLIKMKDLQEQQEHEEDSGSDLDHDLSVKKQELIESISRKLQVLREARESLLEDVQANTVLGAEVEAIVKGVCKPSEFDKFRMFIGDLDKVVNLLLSLSGRLARVENALNNLDDGASPGDRQSLLEKQRVLIQQHEDAKELKENLDRRERIVFDILANYLSEESLADYEHFVKMKSALIIEQRELEDKIHLGEEQLKCLLDSLQPERGK.

A PDZ domain is found at 26-108; sequence LVEVQLSGGA…TLKLVVKRRS (83 aa). 2 disordered regions span residues 128–159 and 183–229; these read ELAA…LSSS and HPSS…KADT. Low complexity predominate over residues 150-159; the sequence is SSSSHDLSSS. 2 stretches are compositionally biased toward polar residues: residues 186–197 and 220–229; these read SRLSVAKSNSSI and PDHTLSKADT. Residue S231 is modified to Phosphoserine. A compositionally biased stretch (low complexity) spans 247–259; the sequence is QGGRQAQAAGDPQ. 8 disordered regions span residues 247–475, 502–678, 695–790, 802–869, 881–1100, 1115–1184, 1268–1302, and 1363–1389; these read QGGR…SGWQ, GALE…PLAG, TSFK…SEDT, EETS…LPRR, KEQR…PSPA, PSVF…LTDK, AEPE…PGLS, and QRRK…VPAA. Residues 312-321 show a composition bias toward pro residues; that stretch reads SSPPPPPPPL. Phosphoserine is present on residues S313 and S325. Low complexity predominate over residues 343–356; that stretch reads AAAAQHFTALAQAQ. The segment covering 358–370 has biased composition (basic and acidic residues); the sequence is RGDRRPELTDRPW. Residues 405-415 are compositionally biased toward low complexity; that stretch reads SSRLQASLSSS. Residue S413 is modified to Phosphoserine. An ASD1 domain is found at 684–773; that stretch reads LKEAQARVLR…SEPEKMNEVG (90 aa). Composition is skewed to basic and acidic residues over residues 754–770 and 821–830; these read FTAE…EKMN and IPRDKPERPR. Residues 842 to 854 show a composition bias toward polar residues; it reads WSRTTSLGDSLNA. Phosphoserine is present on residues S851, S897, S921, S922, and S924. T925 is modified (phosphothreonine). Over residues 926–958 the composition is skewed to basic and acidic residues; that stretch reads DHYKQEASVELRRQAGDPGEPREELPSAVRAEE. Residue S974 is modified to Phosphoserine. A compositionally biased stretch (polar residues) spans 975-994; sequence PGSQQHPPSQKAPNPPTFSE. Phosphoserine is present on residues S1036 and S1039. Positions 1068-1077 are enriched in basic and acidic residues; sequence PKREPRRYRA. Residues 1159 to 1176 are compositionally biased toward polar residues; sequence LRLQTATMETSRSPSPQF. Residues S1171, S1173, and S1297 each carry the phosphoserine modification. Positions 1317–1611 constitute an ASD2 domain; it reads EELAREIVGK…QLKCLLDSLQ (295 aa).

This sequence belongs to the shroom family. Interacts with F-actin. Abundant in retina and melanoma; also in brain, placenta, lung, kidney and pancreas.

The protein localises to the apical cell membrane. It localises to the cell junction. The protein resides in the tight junction. It is found in the cytoplasm. Its subcellular location is the cytoskeleton. Its function is as follows. May be involved in endothelial cell morphology changes during cell spreading. In the retinal pigment epithelium, may regulate the biogenesis of melanosomes and promote their association with the apical cell surface by inducing gamma-tubulin redistribution. This Homo sapiens (Human) protein is Protein Shroom2 (SHROOM2).